An 81-amino-acid chain; its full sequence is Photosystem I iron-sulfur center (81 aa).

2 4Fe-4S ferredoxin-type domains span residues 2–31 (SHAV…MVPW) and 37–68 (GQIA…IRVY). Residues C11, C14, C17, C21, C48, C51, C54, and C58 each coordinate [4Fe-4S] cluster.

The cyanobacterial PSI reaction center is composed of one copy each of PsaA,B,C,D,E,F,I,J,K,L,M and X, and forms trimeric complexes. It depends on [4Fe-4S] cluster as a cofactor.

It is found in the cellular thylakoid membrane. It catalyses the reaction reduced [plastocyanin] + hnu + oxidized [2Fe-2S]-[ferredoxin] = oxidized [plastocyanin] + reduced [2Fe-2S]-[ferredoxin]. Apoprotein for the two 4Fe-4S centers FA and FB of photosystem I (PSI); essential for photochemical activity. FB is the terminal electron acceptor of PSI, donating electrons to ferredoxin. The C-terminus interacts with PsaA/B/D and helps assemble the protein into the PSI complex. Required for binding of PsaD and PsaE to PSI. PSI is a plastocyanin/cytochrome c6-ferredoxin oxidoreductase, converting photonic excitation into a charge separation, which transfers an electron from the donor P700 chlorophyll pair to the spectroscopically characterized acceptors A0, A1, FX, FA and FB in turn. This chain is Photosystem I iron-sulfur center, found in Prochlorococcus marinus subsp. pastoris (strain CCMP1986 / NIES-2087 / MED4).